A 239-amino-acid chain; its full sequence is 1-(5-phosphoribosyl)-5-[(5-phosphoribosylamino)methylideneamino] imidazole-4-carboxamide isomerase (239 aa).

The Proton acceptor role is filled by aspartate 8. Residue aspartate 129 is the Proton donor of the active site.

The protein belongs to the HisA/HisF family.

Its subcellular location is the cytoplasm. It carries out the reaction 1-(5-phospho-beta-D-ribosyl)-5-[(5-phospho-beta-D-ribosylamino)methylideneamino]imidazole-4-carboxamide = 5-[(5-phospho-1-deoxy-D-ribulos-1-ylimino)methylamino]-1-(5-phospho-beta-D-ribosyl)imidazole-4-carboxamide. It participates in amino-acid biosynthesis; L-histidine biosynthesis; L-histidine from 5-phospho-alpha-D-ribose 1-diphosphate: step 4/9. The protein is 1-(5-phosphoribosyl)-5-[(5-phosphoribosylamino)methylideneamino] imidazole-4-carboxamide isomerase of Bacillus cereus (strain AH820).